The following is a 332-amino-acid chain: uncharacterized protein (332 aa).

Composition is skewed to acidic residues over residues glutamate 290–glycine 314 and glutamate 323–glutamate 332. Residues glutamate 290–glutamate 332 form a disordered region.

The protein belongs to the mimivirus L17x/L18x family.

This is an uncharacterized protein from Acanthamoeba polyphaga mimivirus (APMV).